We begin with the raw amino-acid sequence, 230 residues long: Large ribosomal subunit protein uL1 (230 aa).

Belongs to the universal ribosomal protein uL1 family. Part of the 50S ribosomal subunit.

Binds directly to 23S rRNA. The L1 stalk is quite mobile in the ribosome, and is involved in E site tRNA release. In terms of biological role, protein L1 is also a translational repressor protein, it controls the translation of the L11 operon by binding to its mRNA. This is Large ribosomal subunit protein uL1 from Ruminiclostridium cellulolyticum (strain ATCC 35319 / DSM 5812 / JCM 6584 / H10) (Clostridium cellulolyticum).